The sequence spans 537 residues: O-phosphoserine--tRNA(Cys) ligase (537 aa).

Substrate is bound by residues 186 to 188 (HMT), 231 to 233 (SAS), 273 to 274 (YY), and Asn-317.

The protein belongs to the class-II aminoacyl-tRNA synthetase family. O-phosphoseryl-tRNA(Cys) synthetase subfamily. Homotetramer. Interacts with SepCysS.

It carries out the reaction tRNA(Cys) + O-phospho-L-serine + ATP = O-phospho-L-seryl-tRNA(Cys) + AMP + diphosphate. In terms of biological role, catalyzes the attachment of O-phosphoserine (Sep) to tRNA(Cys). The chain is O-phosphoserine--tRNA(Cys) ligase from Methanococcus maripaludis (strain C7 / ATCC BAA-1331).